We begin with the raw amino-acid sequence, 85 residues long: Large ribosomal subunit protein bL27 (85 aa).

Residues 1 to 22 (MAHKKAGGSTRNGRDSESKRLG) form a disordered region.

This sequence belongs to the bacterial ribosomal protein bL27 family.

The chain is Large ribosomal subunit protein bL27 from Aliivibrio salmonicida (strain LFI1238) (Vibrio salmonicida (strain LFI1238)).